We begin with the raw amino-acid sequence, 805 residues long: Leucine--tRNA ligase (805 aa).

The short motif at 40-51 (PYPSGAGLHVGH) is the 'HIGH' region element. A 'KMSKS' region motif is present at residues 576–580 (KMSKS). An ATP-binding site is contributed by K579.

The protein belongs to the class-I aminoacyl-tRNA synthetase family.

Its subcellular location is the cytoplasm. It catalyses the reaction tRNA(Leu) + L-leucine + ATP = L-leucyl-tRNA(Leu) + AMP + diphosphate. The protein is Leucine--tRNA ligase of Geobacillus thermodenitrificans (strain NG80-2).